Consider the following 142-residue polypeptide: Large ribosomal subunit protein uL11 (142 aa).

This sequence belongs to the universal ribosomal protein uL11 family. In terms of assembly, part of the ribosomal stalk of the 50S ribosomal subunit. Interacts with L10 and the large rRNA to form the base of the stalk. L10 forms an elongated spine to which L12 dimers bind in a sequential fashion forming a multimeric L10(L12)X complex. In terms of processing, one or more lysine residues are methylated.

Functionally, forms part of the ribosomal stalk which helps the ribosome interact with GTP-bound translation factors. The protein is Large ribosomal subunit protein uL11 of Solibacter usitatus (strain Ellin6076).